We begin with the raw amino-acid sequence, 83 residues long: Mu-conotoxin-like PnMKLT1-014 (83 aa).

A signal peptide spans 1-22 (MNLTCMMIVAVLFLTAWTFVMA). A propeptide spanning residues 23 to 50 (DDSNNGLANLFSKSRYEMEDPEPSKLEK) is cleaved from the precursor. Cystine bridges form between Cys54-Cys72, Cys61-Cys77, and Cys71-Cys82.

Belongs to the conotoxin O1 superfamily. Expressed by the venom duct.

It localises to the secreted. Functionally, mu-conotoxins block voltage-gated sodium channels (Nav). The protein is Mu-conotoxin-like PnMKLT1-014 of Conus pennaceus (Feathered cone).